A 1256-amino-acid chain; its full sequence is Splicing factor, arginine/serine-rich 19 (1256 aa).

Disordered stretches follow at residues M1–A33, G158–R343, A371–E395, P408–P1030, G1112–L1152, and F1221–L1256. Over residues S7–P27 the composition is skewed to basic and acidic residues. A compositionally biased stretch (low complexity) spans S192 to S206. Residues P207 to P222 show a composition bias toward pro residues. Basic and acidic residues predominate over residues D227–D236. S240 carries the post-translational modification Phosphoserine. Over residues T255 to T265 the composition is skewed to polar residues. Residues P268–G282 are compositionally biased toward acidic residues. T328 is modified (phosphothreonine). Over residues P382–E393 the composition is skewed to acidic residues. Over residues P412–P424 the composition is skewed to low complexity. Phosphoserine is present on residues S442 and S447. The segment covering K478–Q489 has biased composition (basic residues). S491, S493, S510, S518, and S520 each carry phosphoserine. Basic residues-rich tracts occupy residues T538–S553 and R560–S577. Residues S577 and S579 each carry the phosphoserine modification. A compositionally biased stretch (basic residues) spans R592 to R611. Over residues S612–K623 the composition is skewed to basic and acidic residues. At T663 the chain carries Phosphothreonine. Phosphoserine occurs at positions 676 and 682. Y689 bears the Phosphotyrosine mark. S691 and S695 each carry phosphoserine. 2 stretches are compositionally biased toward basic and acidic residues: residues A696–R709 and S719–S741. 2 stretches are compositionally biased toward low complexity: residues P752–S775 and S793–S804. Residue K812 forms a Glycyl lysine isopeptide (Lys-Gly) (interchain with G-Cter in SUMO2) linkage. The segment covering F813 to P831 has biased composition (basic and acidic residues). A phosphoserine mark is found at S819 and S821. Basic residues predominate over residues K843–R875. A phosphoserine mark is found at S876, S883, S910, and S912. Residues S922–L935 are compositionally biased toward pro residues. 2 positions are modified to phosphothreonine: T923 and T936. The span at D938–K947 shows a compositional bias: polar residues. A Phosphoserine modification is found at S939. Phosphothreonine is present on T948. The span at E969–Q984 shows a compositional bias: acidic residues. Residues Q985 to G1017 show a composition bias toward low complexity. The interval P1131–L1256 is necessary for interaction with the CTD domain of POLR2A. A compositionally biased stretch (basic and acidic residues) spans S1133–L1152. Residues P1244–L1256 are compositionally biased toward pro residues.

Belongs to the splicing factor SR family. As to quaternary structure, interacts with POLR2A.

It localises to the nucleus. Its function is as follows. May function in pre-mRNA splicing. The polypeptide is Splicing factor, arginine/serine-rich 19 (Scaf1) (Mus musculus (Mouse)).